Consider the following 464-residue polypeptide: Lysosomal dipeptide transporter MFSD1 (464 aa).

A Dileucine internalization motif motif is present at residues leucine 11 to leucine 12. At serine 20 the chain carries Phosphoserine. The next 12 membrane-spanning stretches (helical) occupy residues leucine 38–cysteine 58, leucine 82–isoleucine 102, threonine 112–phenylalanine 132, alanine 134–valine 154, leucine 190–leucine 210, leucine 214–leucine 234, leucine 265–leucine 285, alanine 303–valine 323, isoleucine 330–threonine 350, leucine 360–valine 380, phenylalanine 391–leucine 411, and leucine 417–leucine 437.

It belongs to the major facilitator superfamily. As to quaternary structure, homodimer. Interacts with lysosomal protein GLMP (via lumenal domain); the interaction starts while both proteins are still in the endoplasmic reticulum and is required for stabilization of MFSD1 in lysosomes but has no direct effect on its targeting to lysosomes or transporter activity. In terms of processing, not N-glycosylated. In terms of tissue distribution, in brain, expressed in the cortex, striatum hippocampus, hypothalamus, thalamus and brainstem (at protein level). Widely expressed with highest levels in kidney and spleen (at protein level).

It localises to the lysosome membrane. It catalyses the reaction L-alpha-aminoacyl-L-arginine(out) = L-alpha-aminoacyl-L-arginine(in). The enzyme catalyses L-arginyl-L-alpha-amino acid(out) = L-arginyl-L-alpha-amino acid(in). It carries out the reaction L-arginyl-glycine(out) = L-arginyl-glycine(in). The catalysed reaction is L-alpha-aminoacyl-L-lysine(out) = L-alpha-aminoacyl-L-lysine(in). It catalyses the reaction L-aspartyl-L-lysine(out) = L-aspartyl-L-lysine(in). The enzyme catalyses L-alanyl-L-lysine(out) = L-alanyl-L-lysine(in). It carries out the reaction L-lysyl-L-alpha-amino acid(out) = L-lysyl-L-alpha-amino acid(in). The catalysed reaction is L-lysyl-L-alanine(out) = L-lysyl-L-alanine(in). It catalyses the reaction L-lysyl-L-lysine(out) = L-lysyl-L-lysine(in). The enzyme catalyses L-lysyl-glycine(out) = L-lysyl-glycine(in). It carries out the reaction L-alpha-aminoacyl-L-histidine(out) = L-alpha-aminoacyl-L-histidine(in). The catalysed reaction is L-histidyl-L-alpha-amino acid(out) = L-histidyl-L-alpha-amino acid(in). It catalyses the reaction L-histidyl-glycine(out) = L-histidyl-glycine(in). Functionally, lysosomal dipeptide uniporter that selectively exports lysine, arginine or histidine-containing dipeptides with a net positive charge from the lysosome lumen into the cytosol. Could play a role in a specific type of protein O-glycosylation indirectly regulating macrophages migration and tissue invasion. Also essential for liver homeostasis. The polypeptide is Lysosomal dipeptide transporter MFSD1 (Mus musculus (Mouse)).